The chain runs to 1050 residues: Bifunctional glutamine synthetase adenylyltransferase/adenylyl-removing enzyme (1050 aa).

An adenylyl removase region spans residues Met1 to Leu531. Positions Asn537–Leu1050 are adenylyl transferase.

It belongs to the GlnE family. The cofactor is Mg(2+).

It carries out the reaction [glutamine synthetase]-O(4)-(5'-adenylyl)-L-tyrosine + phosphate = [glutamine synthetase]-L-tyrosine + ADP. The enzyme catalyses [glutamine synthetase]-L-tyrosine + ATP = [glutamine synthetase]-O(4)-(5'-adenylyl)-L-tyrosine + diphosphate. Functionally, involved in the regulation of glutamine synthetase GlnA, a key enzyme in the process to assimilate ammonia. When cellular nitrogen levels are high, the C-terminal adenylyl transferase (AT) inactivates GlnA by covalent transfer of an adenylyl group from ATP to specific tyrosine residue of GlnA, thus reducing its activity. Conversely, when nitrogen levels are low, the N-terminal adenylyl removase (AR) activates GlnA by removing the adenylyl group by phosphorolysis, increasing its activity. The regulatory region of GlnE binds the signal transduction protein PII (GlnB) which indicates the nitrogen status of the cell. The sequence is that of Bifunctional glutamine synthetase adenylyltransferase/adenylyl-removing enzyme from Corynebacterium efficiens (strain DSM 44549 / YS-314 / AJ 12310 / JCM 11189 / NBRC 100395).